We begin with the raw amino-acid sequence, 761 residues long: Phosphoribosylformylglycinamidine synthase subunit PurL (761 aa).

His58 is an active-site residue. Tyr61 and Lys105 together coordinate ATP. A Mg(2+)-binding site is contributed by Glu107. Substrate contacts are provided by residues 108–111 and Arg130; that span reads SHNH. The active-site Proton acceptor is His109. Mg(2+) is bound at residue Asp131. Residue Gln259 participates in substrate binding. Asp287 provides a ligand contact to Mg(2+). 331–333 contacts substrate; it reads ESQ. 2 residues coordinate ATP: Asn519 and Gly556. Asn557 contributes to the Mg(2+) binding site. Ser559 is a binding site for substrate.

This sequence belongs to the FGAMS family. Monomer. Part of the FGAM synthase complex composed of 1 PurL, 1 PurQ and 2 PurS subunits.

It is found in the cytoplasm. The enzyme catalyses N(2)-formyl-N(1)-(5-phospho-beta-D-ribosyl)glycinamide + L-glutamine + ATP + H2O = 2-formamido-N(1)-(5-O-phospho-beta-D-ribosyl)acetamidine + L-glutamate + ADP + phosphate + H(+). It functions in the pathway purine metabolism; IMP biosynthesis via de novo pathway; 5-amino-1-(5-phospho-D-ribosyl)imidazole from N(2)-formyl-N(1)-(5-phospho-D-ribosyl)glycinamide: step 1/2. Its function is as follows. Part of the phosphoribosylformylglycinamidine synthase complex involved in the purines biosynthetic pathway. Catalyzes the ATP-dependent conversion of formylglycinamide ribonucleotide (FGAR) and glutamine to yield formylglycinamidine ribonucleotide (FGAM) and glutamate. The FGAM synthase complex is composed of three subunits. PurQ produces an ammonia molecule by converting glutamine to glutamate. PurL transfers the ammonia molecule to FGAR to form FGAM in an ATP-dependent manner. PurS interacts with PurQ and PurL and is thought to assist in the transfer of the ammonia molecule from PurQ to PurL. The sequence is that of Phosphoribosylformylglycinamidine synthase subunit PurL from Rhodococcus jostii (strain RHA1).